The primary structure comprises 242 residues: Glucosamine-6-phosphate deaminase (242 aa).

Catalysis depends on Asp-67, which acts as the Proton acceptor; for enolization step. The active-site For ring-opening step is the Asn-136. The active-site Proton acceptor; for ring-opening step is His-138. The active-site For ring-opening step is Glu-143.

The protein belongs to the glucosamine/galactosamine-6-phosphate isomerase family. NagB subfamily.

The enzyme catalyses alpha-D-glucosamine 6-phosphate + H2O = beta-D-fructose 6-phosphate + NH4(+). It functions in the pathway amino-sugar metabolism; N-acetylneuraminate degradation; D-fructose 6-phosphate from N-acetylneuraminate: step 5/5. Functionally, catalyzes the reversible isomerization-deamination of glucosamine 6-phosphate (GlcN6P) to form fructose 6-phosphate (Fru6P) and ammonium ion. This Clostridium perfringens (strain SM101 / Type A) protein is Glucosamine-6-phosphate deaminase.